Reading from the N-terminus, the 248-residue chain is Triosephosphate isomerase (248 aa).

A substrate-binding site is contributed by 9 to 11 (NWK). The active-site Electrophile is His-94. The active-site Proton acceptor is Glu-166. Substrate contacts are provided by residues Gly-172, Ser-212, and 233–234 (GG).

The protein belongs to the triosephosphate isomerase family. Homodimer.

Its subcellular location is the cytoplasm. It catalyses the reaction D-glyceraldehyde 3-phosphate = dihydroxyacetone phosphate. The protein operates within carbohydrate biosynthesis; gluconeogenesis. Its pathway is carbohydrate degradation; glycolysis; D-glyceraldehyde 3-phosphate from glycerone phosphate: step 1/1. Its function is as follows. Involved in the gluconeogenesis. Catalyzes stereospecifically the conversion of dihydroxyacetone phosphate (DHAP) to D-glyceraldehyde-3-phosphate (G3P). In Alkaliphilus metalliredigens (strain QYMF), this protein is Triosephosphate isomerase.